Here is a 43-residue protein sequence, read N- to C-terminus: AVFTVRNNXPYSIAPGVLTGGGAAASTTGFQLAPGXSXNVNVP.

It belongs to the thaumatin family.

In Glebionis coronaria (Crown daisy), this protein is Thaumatin-like protein 1.